The primary structure comprises 205 residues: Ribonuclease HII (205 aa).

In terms of domain architecture, RNase H type-2 spans 16–205 (VSEVGIDEVG…KSFLKKSNLF (190 aa)). A divalent metal cation-binding residues include Asp22, Glu23, and Asp118.

The protein belongs to the RNase HII family. It depends on Mn(2+) as a cofactor. Mg(2+) serves as cofactor.

The protein resides in the cytoplasm. It catalyses the reaction Endonucleolytic cleavage to 5'-phosphomonoester.. Endonuclease that specifically degrades the RNA of RNA-DNA hybrids. The polypeptide is Ribonuclease HII (Prochlorococcus marinus (strain MIT 9215)).